A 401-amino-acid polypeptide reads, in one-letter code: Chorismate synthase (401 aa).

Residues R40 and R46 each contribute to the NADP(+) site. Residues 135–137 (RAS), 256–257 (QA), G300, 315–319 (KPIST), and R341 each bind FMN.

The protein belongs to the chorismate synthase family. In terms of assembly, homotetramer. The cofactor is FMNH2.

It carries out the reaction 5-O-(1-carboxyvinyl)-3-phosphoshikimate = chorismate + phosphate. It functions in the pathway metabolic intermediate biosynthesis; chorismate biosynthesis; chorismate from D-erythrose 4-phosphate and phosphoenolpyruvate: step 7/7. Its function is as follows. Catalyzes the anti-1,4-elimination of the C-3 phosphate and the C-6 proR hydrogen from 5-enolpyruvylshikimate-3-phosphate (EPSP) to yield chorismate, which is the branch point compound that serves as the starting substrate for the three terminal pathways of aromatic amino acid biosynthesis. This reaction introduces a second double bond into the aromatic ring system. This chain is Chorismate synthase, found in Mycobacterium bovis (strain BCG / Pasteur 1173P2).